The chain runs to 288 residues: Alpha/beta hydrolase domain-containing protein 17B (288 aa).

Residues S170, D235, and H264 each act as charge relay system in the active site.

Belongs to the AB hydrolase superfamily. ABHD17 family. In terms of processing, palmitoylated on cysteine residues located in a cysteine cluster at the N-terminus which promotes membrane localization.

It is found in the cell membrane. The protein localises to the recycling endosome membrane. The protein resides in the cell projection. It localises to the dendritic spine. Its subcellular location is the postsynaptic density membrane. The enzyme catalyses S-hexadecanoyl-L-cysteinyl-[protein] + H2O = L-cysteinyl-[protein] + hexadecanoate + H(+). Hydrolyzes fatty acids from S-acylated cysteine residues in proteins. The sequence is that of Alpha/beta hydrolase domain-containing protein 17B from Xenopus tropicalis (Western clawed frog).